The following is a 365-amino-acid chain: Tartrate dehydrogenase/decarboxylase (365 aa).

Residues Asp-225, Asp-250, and Asp-254 each coordinate Mn(2+).

This sequence belongs to the isocitrate and isopropylmalate dehydrogenases family. Homodimer. Mg(2+) serves as cofactor. Requires Mn(2+) as cofactor. The cofactor is K(+).

It localises to the cytoplasm. It carries out the reaction tartrate + NAD(+) = 2-hydroxy-3-oxosuccinate + NADH + H(+). The enzyme catalyses (2R,3S)-tartrate + NAD(+) = 2-hydroxy-3-oxosuccinate + NADH + H(+). It catalyses the reaction (2R,3R)-tartrate + NAD(+) = 2-hydroxy-3-oxosuccinate + NADH + H(+). The catalysed reaction is (2R,3R)-tartrate + H(+) = (R)-glycerate + CO2. It carries out the reaction (R)-malate + NAD(+) = pyruvate + CO2 + NADH. It functions in the pathway carbohydrate acid metabolism; tartrate degradation; 2-hydroxy-3-oxosuccinate from L-tartrate: step 1/1. It participates in carbohydrate acid metabolism; tartrate degradation; 2-hydroxy-3-oxosuccinate from meso-tartrate: step 1/1. The protein operates within carbohydrate acid metabolism; tartrate degradation; D-glycerate from L-tartrate: step 1/1. Has multiple catalytic activities. Apart from catalyzing the oxidation of (+)-tartrate to oxaloglycolate, also converts meso-tartrate to D-glycerate and catalyzes the oxidative decarboxylation of D-malate to pyruvate. The sequence is that of Tartrate dehydrogenase/decarboxylase from Pseudomonas putida (Arthrobacter siderocapsulatus).